We begin with the raw amino-acid sequence, 186 residues long: Dirigent protein 7 (186 aa).

The first 21 residues, 1-21 (MAKLILIIVTQILLIAAVVSA), serve as a signal peptide directing secretion. Asn-70, Asn-91, and Asn-126 each carry an N-linked (GlcNAc...) asparagine glycan.

This sequence belongs to the plant dirigent protein family. Homodimer.

Its subcellular location is the secreted. It localises to the extracellular space. It is found in the apoplast. Dirigent proteins impart stereoselectivity on the phenoxy radical-coupling reaction, yielding optically active lignans from two molecules of coniferyl alcohol in the biosynthesis of lignans, flavonolignans, and alkaloids and thus plays a central role in plant secondary metabolism. The protein is Dirigent protein 7 (DIR7) of Arabidopsis thaliana (Mouse-ear cress).